The chain runs to 282 residues: Bifunctional protein FolD (282 aa).

Residues 164–166 (GAS), Ile-189, and Ile-230 contribute to the NADP(+) site.

The protein belongs to the tetrahydrofolate dehydrogenase/cyclohydrolase family. In terms of assembly, homodimer.

It catalyses the reaction (6R)-5,10-methylene-5,6,7,8-tetrahydrofolate + NADP(+) = (6R)-5,10-methenyltetrahydrofolate + NADPH. It carries out the reaction (6R)-5,10-methenyltetrahydrofolate + H2O = (6R)-10-formyltetrahydrofolate + H(+). Its pathway is one-carbon metabolism; tetrahydrofolate interconversion. Its function is as follows. Catalyzes the oxidation of 5,10-methylenetetrahydrofolate to 5,10-methenyltetrahydrofolate and then the hydrolysis of 5,10-methenyltetrahydrofolate to 10-formyltetrahydrofolate. The sequence is that of Bifunctional protein FolD from Campylobacter jejuni subsp. jejuni serotype O:2 (strain ATCC 700819 / NCTC 11168).